We begin with the raw amino-acid sequence, 79 residues long: Short neurotoxin 1/5 (79 aa).

Positions Met-1–Thr-21 are cleaved as a signal peptide. 4 cysteine pairs are disulfide-bonded: Cys-24–Cys-41, Cys-34–Cys-59, Cys-63–Cys-71, and Cys-72–Cys-77.

This sequence belongs to the three-finger toxin family. Short-chain subfamily. Type III alpha-neurotoxin sub-subfamily. In terms of tissue distribution, expressed by the venom gland.

The protein resides in the secreted. Functionally, binds with high affinity to muscle nicotinic acetylcholine receptor (nAChR) and inhibit acetylcholine from binding to the receptor, thereby impairing neuromuscular transmission. Compete with the binding of alpha-bungarotoxin on muscle AChR (from Torpedo) with an IC(50) of 0.31 uM (SNTX1) and 3.1 uM (SNTX5). Is able of exerting muscle paralysis, spasms and increased respiration. This Pseudonaja textilis (Eastern brown snake) protein is Short neurotoxin 1/5.